Consider the following 460-residue polypeptide: MLQIYNTLSKTKEVFTPLVGNQVRMYVCGMTVYDYCHLGHGRSMVAFDVITRWLRHRGYDLTYVRNITDIDDKIINRANENDEPFDVLTERMIAAMHEDEARLNILKPDQEPRATDHIAGMHAMIQTLIDKGYAYAPGNGDVYYRVGKFAGYGKLSRRRVEDLRIGARIEPGEAKEDPLDFVLWKGAKPGEPSWSSPWGEGRPGWHIECSVMSTCCLGDSFDIHGGGNDLEFPHHENEIAQSEAATGKPYAKSWLHCGMITINGEKMSKSLGNFFTIREVLEKYHPEVVRYLLIASHYRSPINYSEENLREAKAALDRFYNALKGLPEAAPAEAAEYVERFAAAMDDDFNTAGACSVLFELAREVNRLRESDLSAAAALAARLKQLAGLLGVLQLEPEAFLQAGAEGKVDAAEVEALIQARLEARAAKNWAESDRIRDQLTAMGVVLEDGKGGTTWRLAD.

Cysteine 28 lines the Zn(2+) pocket. A 'HIGH' region motif is present at residues 30 to 40 (MTVYDYCHLGH). Zn(2+)-binding residues include cysteine 209, histidine 234, and glutamate 238. The short motif at 266 to 270 (KMSKS) is the 'KMSKS' region element. Lysine 269 provides a ligand contact to ATP.

The protein belongs to the class-I aminoacyl-tRNA synthetase family. Monomer. It depends on Zn(2+) as a cofactor.

The protein localises to the cytoplasm. It carries out the reaction tRNA(Cys) + L-cysteine + ATP = L-cysteinyl-tRNA(Cys) + AMP + diphosphate. This chain is Cysteine--tRNA ligase, found in Pseudomonas aeruginosa (strain UCBPP-PA14).